The chain runs to 150 residues: Ribonuclease H (150 aa).

In terms of domain architecture, RNase H type-1 spans 7-148 (ESNIVEIWTD…ADQLATKARM (142 aa)). Residues D16, E54, D76, and D140 each coordinate Mg(2+).

This sequence belongs to the RNase H family. Monomer. Mg(2+) serves as cofactor.

The protein localises to the cytoplasm. The catalysed reaction is Endonucleolytic cleavage to 5'-phosphomonoester.. Endonuclease that specifically degrades the RNA of RNA-DNA hybrids. The sequence is that of Ribonuclease H from Granulibacter bethesdensis (strain ATCC BAA-1260 / CGDNIH1).